A 1245-amino-acid polypeptide reads, in one-letter code: Pesticidal crystal protein Cry5Ba (1245 aa).

The tract at residues 1219–1245 is disordered; sequence PLPTDDQSSDGNTTSNTNSNTSMNNNQ. The segment covering 1222 to 1245 has biased composition (low complexity); the sequence is TDDQSSDGNTTSNTNSNTSMNNNQ.

It belongs to the delta endotoxin family.

In terms of biological role, promotes colloidosmotic lysis by binding to the midgut epithelial cells of hymenopteran species. This Bacillus thuringiensis protein is Pesticidal crystal protein Cry5Ba (cry5Ba).